A 518-amino-acid chain; its full sequence is Dihydro-ML-236C monooxygenase mlcC (518 aa).

The Cytoplasmic portion of the chain corresponds to Met-1–Ile-31. The chain crosses the membrane as a helical; Signal-anchor for type II membrane protein span at residues Ala-32–Lys-48. Residues Lys-49–Cys-518 lie on the Lumenal side of the membrane. Cys-454 lines the heme pocket.

This sequence belongs to the cytochrome P450 family. Requires heme as cofactor.

Its subcellular location is the endoplasmic reticulum membrane. The catalysed reaction is dihydro-ML-236C carboxylate + reduced [NADPH--hemoprotein reductase] + O2 = ML-236C carboxylate + oxidized [NADPH--hemoprotein reductase] + 2 H2O + H(+). It carries out the reaction ML-236C carboxylate + reduced [NADPH--hemoprotein reductase] + O2 = ML-236A carboxylate + oxidized [NADPH--hemoprotein reductase] + H2O + H(+). Its pathway is polyketide biosynthesis. Dihydro-ML-236C carboxylate monooxygenase; part of the gene cluster that mediates the biosynthesis of compactin, also known as mevastatin or ML-236B, and which acts as a potent competitive inhibitor of HMG-CoA reductase. Compactin biosynthesis is performed in two stages. The first stage is catalyzed by the nonaketide synthase mlcA, which belongs to type I polyketide synthases and catalyzes the iterative nine-step formation of the polyketide. This PKS stage is completed by the action of dehydrogenase mlcG, which catalyzes the NADPH-dependent reduction of the unsaturated tetra-, penta- and heptaketide intermediates that arise during the mlcA-mediated biosynthesis of the nonaketide chain and leads to dihydro-ML-236C carboxylate. Covalently bound dihydro-ML-236C carboxylate is released from mlcA by the mlcF esterase. Conversion of dihydro-ML-236C carboxylate into ML-236A carboxylate is subsequently performed with the participation of molecular oxygen and P450 monoogygenase mlcC. Finally, mlcH performs the conversion of ML-236A carboxylate to ML-236B/compactin carboxylate through the addition of the side-chain diketide moiety produced by the diketide synthase mlcB. This Penicillium citrinum protein is Dihydro-ML-236C monooxygenase mlcC.